Here is a 702-residue protein sequence, read N- to C-terminus: Archaeal Lon protease (702 aa).

Residues 1–63 (MSNESTNDAP…VGVEGDVSID (63 aa)) are disordered. The Cytoplasmic segment spans residues 1–183 (MSNESTNDAP…EARKRNQMRS (183 aa)). A compositionally biased stretch (acidic residues) spans 10 to 48 (PPDDDPDDPEPSVDHDDTDGLQDDPADSVDDAGEVDDLE). 117-124 (GSPGTGKS) is an ATP binding site. The helical transmembrane segment at 184–201 (FLMWIMILLAVGYALLIA) threads the bilayer. Residues 202–206 (TPARP) are Extracellular-facing. The chain crosses the membrane as a helical span at residues 207–223 (LLALLSAAGIYLLFRYT). Over 224–702 (NRGSDAMVPK…GTTGGNPSPQ (479 aa)) the chain is Cytoplasmic. The Lon proteolytic domain maps to 487–667 (EEAVGRVNGL…SEVLDVALVG (181 aa)). Active-site residues include Ser574 and Lys617.

It belongs to the peptidase S16 family. Archaeal LonB subfamily. As to quaternary structure, homohexamer. Organized in a ring with a central cavity.

The protein localises to the cell membrane. In terms of biological role, ATP-dependent serine protease that mediates the selective degradation of mutant and abnormal proteins as well as certain short-lived regulatory proteins. Degrades polypeptides processively. The protein is Archaeal Lon protease of Halobacterium salinarum (strain ATCC 700922 / JCM 11081 / NRC-1) (Halobacterium halobium).